The following is a 278-amino-acid chain: Protein U52 (278 aa).

The segment covering 1–18 (MTRVSSVSASCTTTNPPK) has biased composition (polar residues). Positions 1–25 (MTRVSSVSASCTTTNPPKNTREDMS) are disordered.

This sequence belongs to the herpesviridae UL79 family.

In Elephas maximus (Indian elephant), this protein is Protein U52.